The chain runs to 356 residues: Protein-glutamate methylesterase/protein-glutamine glutaminase 2 (356 aa).

A Response regulatory domain is found at 7-124; sequence KVLCVDDSAL…RDGLMEYTDT (118 aa). Position 58 is a 4-aspartylphosphate (Asp-58). A CheB-type methylesterase domain is found at 157 to 349; the sequence is LLSTEKLIIL…QRVMARLATY (193 aa). Residues Ser-169, His-195, and Asp-291 contribute to the active site.

It belongs to the CheB family. Phosphorylated by CheA. Phosphorylation of the N-terminal regulatory domain activates the methylesterase activity.

Its subcellular location is the cytoplasm. It carries out the reaction [protein]-L-glutamate 5-O-methyl ester + H2O = L-glutamyl-[protein] + methanol + H(+). The enzyme catalyses L-glutaminyl-[protein] + H2O = L-glutamyl-[protein] + NH4(+). Involved in chemotaxis. Part of a chemotaxis signal transduction system that modulates chemotaxis in response to various stimuli. Catalyzes the demethylation of specific methylglutamate residues introduced into the chemoreceptors (methyl-accepting chemotaxis proteins or MCP) by CheR. Also mediates the irreversible deamidation of specific glutamine residues to glutamic acid. The polypeptide is Protein-glutamate methylesterase/protein-glutamine glutaminase 2 (Cupriavidus pinatubonensis (strain JMP 134 / LMG 1197) (Cupriavidus necator (strain JMP 134))).